Reading from the N-terminus, the 536-residue chain is Lysosomal acid glucosylceramidase (536 aa).

The N-terminal stretch at methionine 1–glycine 39 is a signal peptide. Disulfide bonds link cysteine 43–cysteine 55 and cysteine 57–cysteine 62. Asparagine 58, asparagine 98, and asparagine 185 each carry an N-linked (GlcNAc...) asparagine glycan. Glutamate 274 functions as the Proton donor in the catalytic mechanism. Asparagine 309 carries N-linked (GlcNAc...) asparagine glycosylation. The Nucleophile role is filled by glutamate 379. A glycan (N-linked (GlcNAc...) asparagine) is linked at asparagine 501.

This sequence belongs to the glycosyl hydrolase 30 family. Interacts with saposin-C. Interacts with SCARB2. Interacts with TCP1. Interacts with GRN; this interaction prevents aggregation of GBA1-SCARB2 complex via interaction with HSPA1A upon stress.

It localises to the lysosome membrane. It catalyses the reaction a beta-D-glucosyl-(1&lt;-&gt;1')-N-acylsphing-4-enine + H2O = an N-acylsphing-4-enine + D-glucose. It carries out the reaction a beta-D-galactosyl-(1&lt;-&gt;1')-N-acylsphing-4-enine + H2O = an N-acylsphing-4-enine + D-galactose. The catalysed reaction is cholesteryl 3-beta-D-glucoside + H2O = cholesterol + D-glucose. The enzyme catalyses a beta-D-glucosyl-(1&lt;-&gt;1')-N-acylsphing-4-enine + cholesterol = cholesteryl 3-beta-D-glucoside + an N-acylsphing-4-enine. It catalyses the reaction beta-D-glucosyl-N-(9Z-octadecenoyl)-sphing-4E-enine + cholesterol = N-(9Z-octadecenoyl)-sphing-4-enine + cholesteryl 3-beta-D-glucoside. It carries out the reaction beta-D-glucosyl-N-octanoylsphing-4E-enine + cholesterol = N-octanoylsphing-4-enine + cholesteryl 3-beta-D-glucoside. The catalysed reaction is beta-D-glucosyl-N-dodecanoylsphing-4-enine + cholesterol = N-dodecanoylsphing-4-enine + cholesteryl 3-beta-D-glucoside. The enzyme catalyses beta-D-glucosyl-(1&lt;-&gt;1)-N-octadecanoylsphing-4-enine + cholesterol = N-octadecanoylsphing-4-enine + cholesteryl 3-beta-D-glucoside. It catalyses the reaction beta-D-glucosyl-(1&lt;-&gt;1')-N-(15Z-tetracosenoyl)-sphing-4-enine + cholesterol = N-(15Z-tetracosenoyl)-sphing-4-enine + cholesteryl 3-beta-D-glucoside. It carries out the reaction a beta-D-galactosyl-(1&lt;-&gt;1')-N-acylsphing-4-enine + cholesterol = cholesteryl 3-beta-D-galactoside + an N-acylsphing-4-enine. The catalysed reaction is 1-(beta-D-galactosyl)-N-dodecanoylsphing-4-enine + cholesterol = cholesteryl 3-beta-D-galactoside + N-dodecanoylsphing-4-enine. The enzyme catalyses a beta-D-xylosyl-(1&lt;-&gt;1')-N-acylsphing-4-enine + cholesterol = cholesteryl 3-beta-D-xyloside + an N-acylsphing-4-enine. It catalyses the reaction beta-D-xylosyl-(1&lt;-&gt;1')-N-(9Z-octadecenoyl)-sphing-4-enine + cholesterol = cholesteryl 3-beta-D-xyloside + N-(9Z-octadecenoyl)-sphing-4-enine. Its pathway is steroid metabolism; cholesterol metabolism. It functions in the pathway sphingolipid metabolism. Functionally, glucosylceramidase that catalyzes, within the lysosomal compartment, the hydrolysis of glucosylceramides/GlcCers (such as beta-D-glucosyl-(1&lt;-&gt;1')-N-acylsphing-4-enine) into free ceramides (such as N-acylsphing-4-enine) and glucose. Plays a central role in the degradation of complex lipids and the turnover of cellular membranes. Through the production of ceramides, participates in the PKC-activated salvage pathway of ceramide formation. Catalyzes the glucosylation of cholesterol, through a transglucosylation reaction where glucose is transferred from GlcCer to cholesterol. GlcCer containing mono-unsaturated fatty acids (such as beta-D-glucosyl-N-(9Z-octadecenoyl)-sphing-4-enine) are preferred as glucose donors for cholesterol glucosylation when compared with GlcCer containing same chain length of saturated fatty acids (such as beta-D-glucosyl-N-octadecanoyl-sphing-4-enine). Under specific conditions, may alternatively catalyze the reverse reaction, transferring glucose from cholesteryl 3-beta-D-glucoside to ceramide. Can also hydrolyze cholesteryl 3-beta-D-glucoside producing glucose and cholesterol. Catalyzes the hydrolysis of galactosylceramides/GalCers (such as beta-D-galactosyl-(1&lt;-&gt;1')-N-acylsphing-4-enine), as well as the transfer of galactose between GalCers and cholesterol in vitro, but with lower activity than with GlcCers. Contrary to GlcCer and GalCer, xylosylceramide/XylCer (such as beta-D-xyosyl-(1&lt;-&gt;1')-N-acylsphing-4-enine) is not a good substrate for hydrolysis, however it is a good xylose donor for transxylosylation activity to form cholesteryl 3-beta-D-xyloside. The polypeptide is Lysosomal acid glucosylceramidase (GBA1) (Sus scrofa (Pig)).